Consider the following 41-residue polypeptide: Large ribosomal subunit protein bL36 (41 aa).

The protein belongs to the bacterial ribosomal protein bL36 family.

The chain is Large ribosomal subunit protein bL36 from Pelagibacter ubique (strain HTCC1062).